The following is a 963-amino-acid chain: Kinesin-1 heavy chain (963 aa).

N-acetylalanine is present on A2. Residues 8-325 (NIKVMCRFRP…LLFGQRAKTI (318 aa)) enclose the Kinesin motor domain. 85 to 92 (GQTSSGKT) contributes to the ATP binding site. K213 participates in a covalent cross-link: Glycyl lysine isopeptide (Lys-Gly) (interchain with G-Cter in SUMO2). Positions 330–913 (CVNVELTAEQ…EAVRSKNMAR (584 aa)) form a coiled coil. Residues 908–963 (SKNMARRGHSAQIAKPIRPGQHPAASPTHPGAVRGGGSFVQNNQPVGLRGGGGKQA) form a disordered region. A globular region spans residues 915-963 (GHSAQIAKPIRPGQHPAASPTHPGAVRGGGSFVQNNQPVGLRGGGGKQA). Phosphoserine occurs at positions 933 and 945. R956 carries the omega-N-methylarginine modification.

Belongs to the TRAFAC class myosin-kinesin ATPase superfamily. Kinesin family. Kinesin subfamily. As to quaternary structure, oligomer composed of two heavy chains and two light chains. Interacts with GRIP1 and PPP1R42. Interacts with SYBU. Interacts with JAKMIP1. Interacts with PLEKHM2. Interacts with ECPAS. Interacts with ZFYVE27. Found in a complex with OGT, RHOT1, RHOT2 and TRAK1. Interacts with APP (via cytoplasmic domain). As to expression, expressed in the brain (at protein level). Expressed in the brain, liver, kidney, spleen, heart, lung and sciatic nerve.

It localises to the cytoplasm. Its subcellular location is the cytoskeleton. The protein resides in the cytolytic granule membrane. It is found in the lysosome membrane. Its function is as follows. Microtubule-dependent motor required for normal distribution of mitochondria and lysosomes. Can induce formation of neurite-like membrane protrusions in non-neuronal cells in a ZFYVE27-dependent manner. Regulates centrosome and nuclear positioning during mitotic entry. During the G2 phase of the cell cycle in a BICD2-dependent manner, antagonizes dynein function and drives the separation of nuclei and centrosomes. Required for anterograde axonal transportation of MAPK8IP3/JIP3 which is essential for MAPK8IP3/JIP3 function in axon elongation. Through binding with PLEKHM2 and ARL8B, directs lysosome movement toward microtubule plus ends. Involved in NK cell-mediated cytotoxicity. Drives the polarization of cytolytic granules and microtubule-organizing centers (MTOCs) toward the immune synapse between effector NK lymphocytes and target cells. This Rattus norvegicus (Rat) protein is Kinesin-1 heavy chain.